We begin with the raw amino-acid sequence, 614 residues long: Zinc finger protein 276 (614 aa).

Residues 1–46 (MKRDRLGRFLSPGIARQRGGSGGGCGSGRTRGRPSRSGGTSADGAA) are disordered. Over residues 19 to 29 (GGSGGGCGSGR) the composition is skewed to gly residues. The region spanning 78–164 (GHCRLCHGKF…LQRVNVSPAG (87 aa)) is the ZAD domain. The Zn(2+) site is built by Cys80, Cys83, Cys137, and Cys140. Positions 271-422 (RLAQNSESNP…PGPKPGWKKK (152 aa)) are disordered. 2 stretches are compositionally biased toward polar residues: residues 272–282 (LAQNSESNPTG) and 291–302 (RETQVGSETKTL). Residues 357-369 (SDLSEGDFLSEDE) show a composition bias toward acidic residues. A compositionally biased stretch (basic and acidic residues) spans 386–408 (YPEKKVSGKKSEGREAKRPEEPK). A compositionally biased stretch (basic residues) spans 409-422 (IRKKPGPKPGWKKK). C2H2-type zinc fingers lie at residues 434 to 458 (YKCPYQGCTAVYRGADGMKKHIKEH), 465 to 490 (RPCPHPGCNKVFMIDRYLQRHVKLIH), 496 to 518 (YICDECGQTFKQRKHLLVHQMRH), 524 to 546 (LQCEVCGFQCRQRASLKYHMTKH), and 554 to 577 (FACDQCGRRFEKAHNLNVHMSMVH). A disordered region spans residues 588–614 (PLEAEPPPGPLSPSGTMEGQAVKPEPT).

As to expression, found in all the examined tissues, with highest levels in kidney, liver, lung, and spleen.

It is found in the nucleus. The protein resides in the chromosome. The protein localises to the centromere. It localises to the kinetochore. Its function is as follows. May be involved in transcriptional regulation. The sequence is that of Zinc finger protein 276 (Znf276) from Mus musculus (Mouse).